Reading from the N-terminus, the 569-residue chain is Membrane protein insertase YidC (569 aa).

Residues 6–26 (FVLFLIFATSLLFLWDAWQKE) form a helical membrane-spanning segment. Composition is skewed to polar residues over residues 32-52 (QGPK…TAGT) and 62-74 (LASS…STAE). Residues 32-81 (QGPKTAVQGTETQANTGTAGTAETPVPGDQLASSVPQRGSTAENGAPVRA) are disordered. 5 consecutive transmembrane segments (helical) span residues 348–368 (VVDY…LSLF), 375–395 (WGVA…PLSA), 442–462 (GGCL…WVLL), 479–499 (LSAP…MFLQ), and 519–539 (PLAF…YSLV).

It belongs to the OXA1/ALB3/YidC family. Type 1 subfamily. In terms of assembly, interacts with the Sec translocase complex via SecD. Specifically interacts with transmembrane segments of nascent integral membrane proteins during membrane integration.

The protein resides in the cell inner membrane. Required for the insertion and/or proper folding and/or complex formation of integral membrane proteins into the membrane. Involved in integration of membrane proteins that insert both dependently and independently of the Sec translocase complex, as well as at least some lipoproteins. Aids folding of multispanning membrane proteins. The protein is Membrane protein insertase YidC of Nitrosospira multiformis (strain ATCC 25196 / NCIMB 11849 / C 71).